A 405-amino-acid chain; its full sequence is Pulcherriminic acid synthase (405 aa).

Positions 62, 229, 285, and 353 each coordinate heme.

The protein belongs to the cytochrome P450 family. Homodimer. The cofactor is heme.

The catalysed reaction is cyclo(L-leucyl-L-leucyl) + 6 reduced [2Fe-2S]-[ferredoxin] + 3 O2 + 4 H(+) = pulcherriminic acid + 6 oxidized [2Fe-2S]-[ferredoxin] + 4 H2O. Functionally, involved in the biosynthesis of pulcherrimin, a red extracellular pigment. Catalyzes the oxidation of cyclo(L-Leu-L-Leu) (cLL) to yield pulcherriminic acid which forms pulcherrimin via a nonenzymic reaction with Fe(3+). Substrates with small alkyl groups (cAA, cLG, cLP) exhibit weaker binding to CYP134A1, but substrates with larger hydrophobic side chains bind in a similar regime to cLL. The chain is Pulcherriminic acid synthase (cypX) from Bacillus subtilis (strain 168).